Here is a 146-residue protein sequence, read N- to C-terminus: Protein U1 (146 aa).

This sequence belongs to the nanovirus U1 protein family.

This chain is Protein U1 (DNA-U1), found in Subterranean clover stunt virus (strain F) (SCSV).